The following is a 126-amino-acid chain: Large ribosomal subunit protein bL19 (126 aa).

This sequence belongs to the bacterial ribosomal protein bL19 family.

This protein is located at the 30S-50S ribosomal subunit interface and may play a role in the structure and function of the aminoacyl-tRNA binding site. The sequence is that of Large ribosomal subunit protein bL19 from Prochlorococcus marinus (strain MIT 9312).